Reading from the N-terminus, the 289-residue chain is Purine nucleoside phosphorylase (289 aa).

At methionine 1 the chain carries N-acetylmethionine. Phosphate contacts are provided by residues serine 33, histidine 64, and arginine 84 to histidine 86. Residue tyrosine 88 coordinates a purine D-ribonucleoside. Phosphate is bound at residue alanine 116. A purine D-ribonucleoside contacts are provided by glutamate 201 and methionine 219. Residue serine 220 participates in phosphate binding. Residue asparagine 243 participates in a purine D-ribonucleoside binding. Phosphoserine is present on serine 251. An a purine D-ribonucleoside-binding site is contributed by histidine 257.

Belongs to the PNP/MTAP phosphorylase family. In terms of assembly, homotrimer. As to expression, expressed in red blood cells; overexpressed in red blood cells (cytoplasm) of patients with hereditary non-spherocytic hemolytic anemia of unknown etiology.

It localises to the cytoplasm. It carries out the reaction inosine + phosphate = alpha-D-ribose 1-phosphate + hypoxanthine. It catalyses the reaction guanosine + phosphate = alpha-D-ribose 1-phosphate + guanine. The enzyme catalyses 2'-deoxyguanosine + phosphate = 2-deoxy-alpha-D-ribose 1-phosphate + guanine. The catalysed reaction is 2'-deoxyinosine + phosphate = 2-deoxy-alpha-D-ribose 1-phosphate + hypoxanthine. It participates in purine metabolism; purine nucleoside salvage. With respect to regulation, inhibited by 5'-deaza-1'-aza-2c-deoxy-1'-(9-methylene)-Immucilin-G (DADMe-ImmG). Functionally, catalyzes the phosphorolytic breakdown of the N-glycosidic bond in the beta-(deoxy)ribonucleoside molecules, with the formation of the corresponding free purine bases and pentose-1-phosphate. Preferentially acts on 6-oxopurine nucleosides including inosine and guanosine. The chain is Purine nucleoside phosphorylase (PNP) from Homo sapiens (Human).